Here is a 962-residue protein sequence, read N- to C-terminus: Protease 3 (962 aa).

The signal sequence occupies residues 1-23 (MPRSTWFKALLLFVALWAPLSQA). Position 88 (histidine 88) interacts with Zn(2+). Glutamate 91 acts as the Proton acceptor in catalysis. Histidine 92 and glutamate 169 together coordinate Zn(2+).

It belongs to the peptidase M16 family. As to quaternary structure, monomer. The cofactor is Zn(2+).

It is found in the periplasm. The enzyme catalyses Preferential cleavage of 16-Tyr-|-Leu-17 and 25-Phe-|-Tyr-26 bonds of oxidized insulin B chain. Also acts on other substrates of Mw less than 7 kDa such as insulin and glucagon.. Functionally, endopeptidase that degrades small peptides of less than 7 kDa, such as glucagon and insulin. The protein is Protease 3 (ptrA) of Shigella flexneri.